A 256-amino-acid polypeptide reads, in one-letter code: MLIVISPAKNLDYDSPVPTAKSTKAALLDDASELMDGLKTLAPQDVSQLMGISDKLGLLNYDRFQDWQLPLTKKNARQALLAFKGDVYVGLDAYNFSAEDFDFAQQHLRILSGLYGVLKPLDLVAPYRLEMGTRFANDRGKDLYAFWGDKVTAELNKPIKKLASNTLINLASNEYFKSVKPAHLQAQIITPVFKDWKNGTYKIISFFAKKARGRMSAYIIKNQITDPELIKQFDWDGYQYNSAMSDAGQWVFTRKQ.

Belongs to the UPF0246 family.

The sequence is that of UPF0246 protein TERTU_4575 from Teredinibacter turnerae (strain ATCC 39867 / T7901).